The sequence spans 314 residues: tRNA pseudouridine synthase B (314 aa).

His-43 contacts substrate. The active-site Nucleophile is Asp-48. The substrate site is built by Tyr-76, Tyr-179, and Leu-200.

It belongs to the pseudouridine synthase TruB family. Type 1 subfamily.

The catalysed reaction is uridine(55) in tRNA = pseudouridine(55) in tRNA. In terms of biological role, responsible for synthesis of pseudouridine from uracil-55 in the psi GC loop of transfer RNAs. The chain is tRNA pseudouridine synthase B from Pectobacterium atrosepticum (strain SCRI 1043 / ATCC BAA-672) (Erwinia carotovora subsp. atroseptica).